Reading from the N-terminus, the 120-residue chain is uncharacterized protein (120 aa).

One can recognise an HIT domain in the interval 7–120; sequence VFAKIITKNL…KLIGLINNND (114 aa). The Histidine triad motif signature appears at 101–105; it reads HFHFH.

This is an uncharacterized protein from Rickettsia prowazekii (strain Madrid E).